The primary structure comprises 738 residues: Polyribonucleotide nucleotidyltransferase (738 aa).

2 residues coordinate Mg(2+): aspartate 487 and aspartate 493. The region spanning 554-613 (PKIVTMTINPDKIRDVIGPGGKMINSIIDQTGVKIDIEQDGTVFIASTDQEGIDLAMSMI) is the KH domain. Residues 623 to 691 (GEVYDATVRR…DKGRVNASRK (69 aa)) form the S1 motif domain. Positions 704-738 (EAYEAKRKAARESRPPRDSRPPRRDGDRRPPRSTN) are disordered.

It belongs to the polyribonucleotide nucleotidyltransferase family. It depends on Mg(2+) as a cofactor.

The protein resides in the cytoplasm. It carries out the reaction RNA(n+1) + phosphate = RNA(n) + a ribonucleoside 5'-diphosphate. Functionally, involved in mRNA degradation. Catalyzes the phosphorolysis of single-stranded polyribonucleotides processively in the 3'- to 5'-direction. This chain is Polyribonucleotide nucleotidyltransferase, found in Exiguobacterium sp. (strain ATCC BAA-1283 / AT1b).